Here is a 185-residue protein sequence, read N- to C-terminus: Ribosome-recycling factor (185 aa).

This sequence belongs to the RRF family.

The protein localises to the cytoplasm. Functionally, responsible for the release of ribosomes from messenger RNA at the termination of protein biosynthesis. May increase the efficiency of translation by recycling ribosomes from one round of translation to another. In Lactococcus lactis subsp. cremoris (strain SK11), this protein is Ribosome-recycling factor.